We begin with the raw amino-acid sequence, 461 residues long: Carbamoyl phosphate synthase arginine-specific small chain (461 aa).

The region spanning 240 to 427 is the Glutamine amidotransferase type-1 domain; it reads HVALIDCGVK…LENVQMYKDN (188 aa). Cys316 (nucleophile) is an active-site residue. Active-site residues include His400 and Glu402.

This sequence belongs to the CarA family. In terms of assembly, heterodimer composed of 2 chains; the small (or glutamine) chain promotes the hydrolysis of glutamine to ammonia, which is used by the large (or ammonia) chain to synthesize carbamoyl phosphate.

Its subcellular location is the cytoplasm. The enzyme catalyses hydrogencarbonate + L-glutamine + 2 ATP + H2O = carbamoyl phosphate + L-glutamate + 2 ADP + phosphate + 2 H(+). The catalysed reaction is L-glutamine + H2O = L-glutamate + NH4(+). The protein operates within amino-acid biosynthesis; L-arginine biosynthesis; carbamoyl phosphate from bicarbonate: step 1/1. Functionally, small subunit of the arginine-specific carbamoyl phosphate synthase (CPSase). CPSase catalyzes the formation of carbamoyl phosphate from the ammonia moiety of glutamine, carbonate, and phosphate donated by ATP, constituting the first step of 2 biosynthetic pathways, one leading to arginine and/or urea and the other to pyrimidine nucleotides. The small subunit (glutamine amidotransferase) binds and cleaves glutamine to supply the large subunit with the substrate ammonia. This is Carbamoyl phosphate synthase arginine-specific small chain (CPA1) from Chaetomium globosum (strain ATCC 6205 / CBS 148.51 / DSM 1962 / NBRC 6347 / NRRL 1970) (Soil fungus).